The chain runs to 485 residues: Glutamyl-tRNA(Gln) amidotransferase subunit A (485 aa).

Active-site charge relay system residues include Lys78 and Ser153. Residue Ser177 is the Acyl-ester intermediate of the active site.

Belongs to the amidase family. GatA subfamily. In terms of assembly, heterotrimer of A, B and C subunits.

It catalyses the reaction L-glutamyl-tRNA(Gln) + L-glutamine + ATP + H2O = L-glutaminyl-tRNA(Gln) + L-glutamate + ADP + phosphate + H(+). In terms of biological role, allows the formation of correctly charged Gln-tRNA(Gln) through the transamidation of misacylated Glu-tRNA(Gln) in organisms which lack glutaminyl-tRNA synthetase. The reaction takes place in the presence of glutamine and ATP through an activated gamma-phospho-Glu-tRNA(Gln). The protein is Glutamyl-tRNA(Gln) amidotransferase subunit A of Pelobacter propionicus (strain DSM 2379 / NBRC 103807 / OttBd1).